A 2773-amino-acid polypeptide reads, in one-letter code: Peramine synthetase A (2773 aa).

The tract at residues 246 to 644 (FEDQVYSQPL…GRKDAQVKIR (399 aa)) is adenylation 1. In terms of domain architecture, Carrier 1 spans 774–850 (QPTCEMEERM…DLAKNCSQTL (77 aa)). S811 carries the O-(pantetheine 4'-phosphoryl)serine modification. The condensation stretch occupies residues 888 to 1301 (QDAYPCTRLQ…MSSAEDLEQI (414 aa)). The interval 1321 to 1720 (ADQVQARPDS…GRKDTQVKVR (400 aa)) is adenylation 2. A methylation (Met) domain region spans residues 1810–1949 (IGRDFVGWSS…IIQHLASLGS (140 aa)). Residues 2250-2271 (MLSESLQQKAPPTARKRLPSTA) form a disordered region. In terms of domain architecture, Carrier 2 spans 2267-2345 (LPSTAPERAM…HLLQTAAAGV (79 aa)). S2304 carries the O-(pantetheine 4'-phosphoryl)serine modification. The interval 2397 to 2715 (TVVLTGANGF…LQDLADTARS (319 aa)) is thiesterase (TE) domain.

It belongs to the NRP synthetase family. Requires pantetheine 4'-phosphate as cofactor.

The catalysed reaction is (S)-1-pyrroline-5-carboxylate + L-arginine + S-adenosyl-L-methionine + 2 ATP = peramine + 2 AMP + S-adenosyl-L-homocysteine + 2 diphosphate + H2O + 2 H(+). In terms of biological role, nonribosomal peptide synthetase involved in the biosynthesis of peramine, a pyrrolopyrazine synthesized in association with the grass host that protects the plant from insect herbivory. The single multifunctional NRPS perA seems to be responsible for all catalytic steps in the biosynthesis of peramine. The condensation domain of perA is proposed to catalyze formation of a peptide bond between 1-pyrroline-5-carboxylate and arginine. The methylation domain of perA would catalyze the N-methylation of the alpha-amino group of arginine. The reductase domain is proposed to be responsible for reduction of the thioester and the cyclization to form an iminium ion resulting in release from the peptide synthetase. Deprotonation of this intermediate and oxidation of the pyrroline ring would give rise to peramine. This final oxidation to give the pyrrole functionality may be spontaneous. The chain is Peramine synthetase A from Epichloe festucae (strain Fl1).